The sequence spans 497 residues: Probable cytosol aminopeptidase (497 aa).

The Mn(2+) site is built by K264 and D269. K276 is a catalytic residue. Positions 287, 347, and 349 each coordinate Mn(2+). Residue R351 is part of the active site.

Belongs to the peptidase M17 family. Mn(2+) is required as a cofactor.

It is found in the cytoplasm. It catalyses the reaction Release of an N-terminal amino acid, Xaa-|-Yaa-, in which Xaa is preferably Leu, but may be other amino acids including Pro although not Arg or Lys, and Yaa may be Pro. Amino acid amides and methyl esters are also readily hydrolyzed, but rates on arylamides are exceedingly low.. It carries out the reaction Release of an N-terminal amino acid, preferentially leucine, but not glutamic or aspartic acids.. Presumably involved in the processing and regular turnover of intracellular proteins. Catalyzes the removal of unsubstituted N-terminal amino acids from various peptides. This chain is Probable cytosol aminopeptidase, found in Thermosynechococcus vestitus (strain NIES-2133 / IAM M-273 / BP-1).